Here is a 506-residue protein sequence, read N- to C-terminus: Transforming growth factor beta-1-induced transcript 1 protein (506 aa).

The LD motif 1 motif lies at 3-15 (DLDALLADLQITT). The interval 15–62 (TPPRCPVLLTDSPEKPQPTETRPPPPPYDPKTAMSNKTSDHETFPVDK) is disordered. Residues 52 to 62 (TSDHETFPVDK) show a composition bias toward basic and acidic residues. Short sequence motifs (LD motif) lie at residues 87 to 99 (ELDRLLNELNATQ) and 139 to 150 (ELDRLMASLSDF). Disordered stretches follow at residues 154–201 (NTVS…PTPK) and 221–244 (SDEVTASRVPDSVSGSKVPEATSV). The span at 168–177 (GSEEVSRPGD) shows a compositional bias: basic and acidic residues. Residues 248–260 (DLDSMLVKLQSGL) carry the LD motif 4 motif. LIM zinc-binding domains lie at 271-330 (GLCE…LYAP), 331-388 (RCAL…RLFG), 389-448 (AVCA…RRGS), and 449-506 (LCAG…RLYG).

It belongs to the paxillin family. Interacts with tcf3 and tcf7l2.

The protein resides in the cell junction. Its subcellular location is the focal adhesion. It is found in the nucleus matrix. It localises to the cytoplasm. The protein localises to the cytoskeleton. Its function is as follows. Functions as a molecular adapter coordinating multiple protein-protein interactions at the focal adhesion complex and in the nucleus. May regulate both Wnt and steroid signaling pathways and play a role in the processes of cell growth, proliferation, migration, differentiation and senescence. May have a zinc-dependent DNA-binding activity. This chain is Transforming growth factor beta-1-induced transcript 1 protein (tgfb1i1), found in Xenopus laevis (African clawed frog).